The sequence spans 95 residues: Co-chaperonin GroES (95 aa).

It belongs to the GroES chaperonin family. Heptamer of 7 subunits arranged in a ring. Interacts with the chaperonin GroEL.

The protein resides in the cytoplasm. In terms of biological role, together with the chaperonin GroEL, plays an essential role in assisting protein folding. The GroEL-GroES system forms a nano-cage that allows encapsulation of the non-native substrate proteins and provides a physical environment optimized to promote and accelerate protein folding. GroES binds to the apical surface of the GroEL ring, thereby capping the opening of the GroEL channel. This is Co-chaperonin GroES from Lachnoclostridium phytofermentans (strain ATCC 700394 / DSM 18823 / ISDg) (Clostridium phytofermentans).